The following is a 449-amino-acid chain: Probable phosphoglucosamine mutase (449 aa).

S101 functions as the Phosphoserine intermediate in the catalytic mechanism. Mg(2+)-binding residues include S101, D239, D241, and D243. S101 carries the post-translational modification Phosphoserine.

The protein belongs to the phosphohexose mutase family. Mg(2+) is required as a cofactor. Post-translationally, activated by phosphorylation.

The catalysed reaction is alpha-D-glucosamine 1-phosphate = D-glucosamine 6-phosphate. Catalyzes the conversion of glucosamine-6-phosphate to glucosamine-1-phosphate. This chain is Probable phosphoglucosamine mutase, found in Methanothermobacter thermautotrophicus (strain ATCC 29096 / DSM 1053 / JCM 10044 / NBRC 100330 / Delta H) (Methanobacterium thermoautotrophicum).